The chain runs to 335 residues: MVKAKIAVNGYGTIGKRVADAVQAQDDMEIIGVSKTKPNYEAAVAHQKGYDLFAPASNSGAFEKAGIPLAGTIEEMVEKADLVVDCTPGGIGEANKPMYEKAGVKAIWQGGEDHELAGFSFNAASNYEGALGRDLVRVVSCNTTGLCRVIYPIDRELGVKKVRVTLARRATDPNDIKKGPINAIVPDPIKLPSHHGPDIKSVLPHINITTAALKIPTTLMHLHTVNMEVNTDCTAEDINRIFSSQSRIRFMSQGINSTAEIIELARDMGRPRNDMWENCIWPESITVHEREFYFFQAIHQESIVVPETVDAIRAMMELESDGAKSIQKTNKAIGL.

Residues 13 to 14 and G111 contribute to the NAD(+) site; that span reads TI. 140-142 contacts D-glyceraldehyde 3-phosphate; sequence SCN. Residue C141 is the Nucleophile of the active site. R169 is a binding site for NAD(+). D-glyceraldehyde 3-phosphate contacts are provided by residues T171 and 195–196; that span reads HG. Residue Q300 participates in NAD(+) binding.

Belongs to the glyceraldehyde-3-phosphate dehydrogenase family. In terms of assembly, homotetramer.

The protein resides in the cytoplasm. The catalysed reaction is D-glyceraldehyde 3-phosphate + phosphate + NADP(+) = (2R)-3-phospho-glyceroyl phosphate + NADPH + H(+). The enzyme catalyses D-glyceraldehyde 3-phosphate + phosphate + NAD(+) = (2R)-3-phospho-glyceroyl phosphate + NADH + H(+). It functions in the pathway carbohydrate degradation; glycolysis; pyruvate from D-glyceraldehyde 3-phosphate: step 1/5. The sequence is that of Glyceraldehyde-3-phosphate dehydrogenase from Methanosarcina mazei (strain ATCC BAA-159 / DSM 3647 / Goe1 / Go1 / JCM 11833 / OCM 88) (Methanosarcina frisia).